A 211-amino-acid polypeptide reads, in one-letter code: Pyridoxine/pyridoxamine 5'-phosphate oxidase (211 aa).

Residues arginine 7–tyrosine 10 and lysine 65 each bind substrate. FMN contacts are provided by residues arginine 60 to lysine 65, tyrosine 75 to threonine 76, arginine 81, lysine 82, and glutamine 104. Substrate contacts are provided by tyrosine 122, arginine 126, and serine 130. Residues glutamine 139–serine 140 and tryptophan 184 contribute to the FMN site. Substrate is bound at residue arginine 190 to histidine 192. Residue arginine 194 participates in FMN binding.

The protein belongs to the pyridoxamine 5'-phosphate oxidase family. Homodimer. FMN serves as cofactor.

It catalyses the reaction pyridoxamine 5'-phosphate + O2 + H2O = pyridoxal 5'-phosphate + H2O2 + NH4(+). It carries out the reaction pyridoxine 5'-phosphate + O2 = pyridoxal 5'-phosphate + H2O2. The protein operates within cofactor metabolism; pyridoxal 5'-phosphate salvage; pyridoxal 5'-phosphate from pyridoxamine 5'-phosphate: step 1/1. It functions in the pathway cofactor metabolism; pyridoxal 5'-phosphate salvage; pyridoxal 5'-phosphate from pyridoxine 5'-phosphate: step 1/1. In terms of biological role, catalyzes the oxidation of either pyridoxine 5'-phosphate (PNP) or pyridoxamine 5'-phosphate (PMP) into pyridoxal 5'-phosphate (PLP). The protein is Pyridoxine/pyridoxamine 5'-phosphate oxidase of Vibrio cholerae serotype O1 (strain ATCC 39541 / Classical Ogawa 395 / O395).